A 410-amino-acid polypeptide reads, in one-letter code: Chloroacetanilide N-alkylformylase, ferredoxin reductase component (410 aa).

Gly-14, Asp-36, Lys-49, Val-82, Arg-130, Asp-279, and Val-298 together coordinate FAD.

It belongs to the FAD-dependent oxidoreductase family. The chloroacetanilide N-alkylformylase multicomponent enzyme system is composed of an oxygenase component (CndA) and an electron transfer component formed by a ferredoxin reductase (CndC1) and a ferredoxin (CndB1). In vitro, chloroacetanilide N-alkylformylase assays in which CndB1 is substituted for CndB2 demonstrate that the two enzymes possess nearly identical activities. It depends on FAD as a cofactor.

The catalysed reaction is 2 reduced [2Fe-2S]-[ferredoxin] + NAD(+) + H(+) = 2 oxidized [2Fe-2S]-[ferredoxin] + NADH. Functionally, component of the chloroacetanilide N-alkylformylase multicomponent enzyme system involved in the degradation of chloroacetanilide herbicides (N-alkoxyalkyl-N-chloroacetyl-substituted aniline derivatives). In vitro, catalyzes the transfers of electrons from ferredoxin (CndB1) to NADH. N-dealkylase utilizes NADH, but not NADPH, as the electron donor. The polypeptide is Chloroacetanilide N-alkylformylase, ferredoxin reductase component (Rhizorhabdus wittichii (strain DC-6 / KACC 16600) (Sphingomonas wittichii)).